A 306-amino-acid chain; its full sequence is Homoserine kinase (306 aa).

Position 84–94 (84–94 (PAGLGLGSSGA)) interacts with ATP.

The protein belongs to the GHMP kinase family. Homoserine kinase subfamily.

It is found in the cytoplasm. It catalyses the reaction L-homoserine + ATP = O-phospho-L-homoserine + ADP + H(+). It functions in the pathway amino-acid biosynthesis; L-threonine biosynthesis; L-threonine from L-aspartate: step 4/5. Functionally, catalyzes the ATP-dependent phosphorylation of L-homoserine to L-homoserine phosphate. The chain is Homoserine kinase from Sulfolobus acidocaldarius (strain ATCC 33909 / DSM 639 / JCM 8929 / NBRC 15157 / NCIMB 11770).